The primary structure comprises 503 residues: ATP synthase subunit alpha (503 aa).

170–177 (GDKQTGKT) is an ATP binding site.

The protein belongs to the ATPase alpha/beta chains family. In terms of assembly, F-type ATPases have 2 components, CF(1) - the catalytic core - and CF(0) - the membrane proton channel. CF(1) has five subunits: alpha(3), beta(3), gamma(1), delta(1), epsilon(1). CF(0) has three main subunits: a(1), b(2) and c(9-12). The alpha and beta chains form an alternating ring which encloses part of the gamma chain. CF(1) is attached to CF(0) by a central stalk formed by the gamma and epsilon chains, while a peripheral stalk is formed by the delta and b chains.

It localises to the cell inner membrane. It catalyses the reaction ATP + H2O + 4 H(+)(in) = ADP + phosphate + 5 H(+)(out). Produces ATP from ADP in the presence of a proton gradient across the membrane. The alpha chain is a regulatory subunit. The protein is ATP synthase subunit alpha of Helicobacter pylori (strain G27).